A 228-amino-acid polypeptide reads, in one-letter code: 7-cyano-7-deazaguanine synthase (228 aa).

16–26 contributes to the ATP binding site; that stretch reads FSGGQDSTTCL. Zn(2+) is bound by residues C193, C201, C204, and C207.

The protein belongs to the QueC family. Requires Zn(2+) as cofactor.

It carries out the reaction 7-carboxy-7-deazaguanine + NH4(+) + ATP = 7-cyano-7-deazaguanine + ADP + phosphate + H2O + H(+). Its pathway is purine metabolism; 7-cyano-7-deazaguanine biosynthesis. Catalyzes the ATP-dependent conversion of 7-carboxy-7-deazaguanine (CDG) to 7-cyano-7-deazaguanine (preQ(0)). In Pasteurella multocida (strain Pm70), this protein is 7-cyano-7-deazaguanine synthase.